The sequence spans 197 residues: Putative RNA-binding protein EEED8.12 (197 aa).

Residues 61–138 form the RRM domain; that stretch reads KSVFIGNVDF…RPIVVTAKRT (78 aa). The disordered stretch occupies residues 142-166; it reads GMGHGVRGSSRGTFGRGRGAARGAP.

The protein is Putative RNA-binding protein EEED8.12 of Caenorhabditis elegans.